Consider the following 787-residue polypeptide: Phenylalanine--tRNA ligase beta subunit (787 aa).

In terms of domain architecture, tRNA-binding spans 38–151 (GQDPAPFVVA…SDYEVGDSFF (114 aa)). The B5 domain occupies 397-474 (SEGRVISFNP…RMHGYDKVQE (78 aa)). Mg(2+) contacts are provided by Asp452, Asp458, Glu461, and Glu462. One can recognise an FDX-ACB domain in the interval 694 to 785 (HKYQPVKRDF…VAQKLGGELR (92 aa)).

The protein belongs to the phenylalanyl-tRNA synthetase beta subunit family. Type 1 subfamily. Tetramer of two alpha and two beta subunits. Mg(2+) serves as cofactor.

Its subcellular location is the cytoplasm. It carries out the reaction tRNA(Phe) + L-phenylalanine + ATP = L-phenylalanyl-tRNA(Phe) + AMP + diphosphate + H(+). This is Phenylalanine--tRNA ligase beta subunit from Anaplasma marginale (strain St. Maries).